The primary structure comprises 213 residues: MTRVKICGTTTPEDALACAVSGADAIGMLVDVRISPRCITADQARLITSVLPPFVASVIVMQPSTPGEVVDAVRKIRPTAVQLHGSEPPDFLKHIKLQVPGVRLIKTIHVGEGGEIEKARQYEGVADAILLDTASARGGGMGITHDWNVSREIIGSVRLPVILAGGLSPKNVAEAIEAARPYAVDVCSGVEAEKRKKDLRLVREFIEQVRVTK.

The protein belongs to the TrpF family.

It catalyses the reaction N-(5-phospho-beta-D-ribosyl)anthranilate = 1-(2-carboxyphenylamino)-1-deoxy-D-ribulose 5-phosphate. The protein operates within amino-acid biosynthesis; L-tryptophan biosynthesis; L-tryptophan from chorismate: step 3/5. The sequence is that of N-(5'-phosphoribosyl)anthranilate isomerase from Methanocella arvoryzae (strain DSM 22066 / NBRC 105507 / MRE50).